We begin with the raw amino-acid sequence, 328 residues long: Putative potassium channel protein YugO (328 aa).

3 consecutive transmembrane segments (helical) span residues 19–39 (IGVI…ILEP), 42–62 (FTSV…VGYG), and 73–93 (AAGI…FATL). The RCK N-terminal domain maps to 114–238 (RDHIILIGWN…ERAGANQIIG (125 aa)).

It localises to the cell membrane. In Bacillus subtilis (strain 168), this protein is Putative potassium channel protein YugO (yugO).